The following is a 200-amino-acid chain: NADH-quinone oxidoreductase subunit B (200 aa).

4 residues coordinate [4Fe-4S] cluster: C78, C79, C144, and C174.

The protein belongs to the complex I 20 kDa subunit family. NDH-1 is composed of 14 different subunits. Subunits NuoB, C, D, E, F, and G constitute the peripheral sector of the complex. It depends on [4Fe-4S] cluster as a cofactor.

The protein resides in the cell membrane. It catalyses the reaction a quinone + NADH + 5 H(+)(in) = a quinol + NAD(+) + 4 H(+)(out). NDH-1 shuttles electrons from NADH, via FMN and iron-sulfur (Fe-S) centers, to quinones in the respiratory chain. The immediate electron acceptor for the enzyme in this species is believed to be ubiquinone. Couples the redox reaction to proton translocation (for every two electrons transferred, four hydrogen ions are translocated across the cytoplasmic membrane), and thus conserves the redox energy in a proton gradient. In Dehalococcoides mccartyi (strain CBDB1), this protein is NADH-quinone oxidoreductase subunit B.